A 758-amino-acid polypeptide reads, in one-letter code: GPI ethanolamine phosphate transferase 2 (758 aa).

N-linked (GlcNAc...) asparagine glycosylation is found at asparagine 28, asparagine 77, and asparagine 178. 3 helical membrane passes run 405 to 425 (LVAI…FRNL), 431 to 451 (LLAF…SSFI), and 455 to 472 (HVIW…QLLN). The N-linked (GlcNAc...) asparagine glycan is linked to asparagine 493. 6 helical membrane passes run 533–553 (PSPI…MPII), 561–581 (PIIA…LLLI), 598–618 (LFIL…YDIW), 667–687 (IFAV…WWCL), 698–718 (VKTF…SCFI), and 733–753 (LLYN…ISTI).

Belongs to the PIGG/PIGN/PIGO family. PIGG subfamily.

The protein resides in the endoplasmic reticulum membrane. The protein operates within glycolipid biosynthesis; glycosylphosphatidylinositol-anchor biosynthesis. Its function is as follows. Ethanolamine phosphate transferase involved in glycosylphosphatidylinositol-anchor biosynthesis. Transfers ethanolamine phosphate to the GPI second mannose. The protein is GPI ethanolamine phosphate transferase 2 (las21) of Schizosaccharomyces pombe (strain 972 / ATCC 24843) (Fission yeast).